A 117-amino-acid chain; its full sequence is MAMTEESVDQVEVNCLCVQHGQSCNNTRCFVKEGLRANWFYNPVLEEFAIPDSYQEGHGVNVKITFSHRSRNLRHNGHDVICSYSHLGSHISIRCTCNKPRPHLSLIEAACSMYNLD.

The chain is Early E3 13.3 kDa protein from Canine adenovirus serotype 1 (strain Glaxo) (CAdV-1).